Consider the following 297-residue polypeptide: 4-hydroxy-tetrahydrodipicolinate synthase (297 aa).

Residue T47 coordinates pyruvate. Y135 serves as the catalytic Proton donor/acceptor. The active-site Schiff-base intermediate with substrate is K163. I205 provides a ligand contact to pyruvate.

It belongs to the DapA family. In terms of assembly, homotetramer; dimer of dimers.

The protein resides in the cytoplasm. It catalyses the reaction L-aspartate 4-semialdehyde + pyruvate = (2S,4S)-4-hydroxy-2,3,4,5-tetrahydrodipicolinate + H2O + H(+). It participates in amino-acid biosynthesis; L-lysine biosynthesis via DAP pathway; (S)-tetrahydrodipicolinate from L-aspartate: step 3/4. In terms of biological role, catalyzes the condensation of (S)-aspartate-beta-semialdehyde [(S)-ASA] and pyruvate to 4-hydroxy-tetrahydrodipicolinate (HTPA). The chain is 4-hydroxy-tetrahydrodipicolinate synthase from Dehalococcoides mccartyi (strain CBDB1).